Here is a 309-residue protein sequence, read N- to C-terminus: Zinc finger protein-like 1 homolog (309 aa).

The segment at 1–43 (MGLCKCPKRKVTNLFCYEHRVNVCEFCLVDNHPNCVVQSYLTW) adopts a B box-type; degenerate zinc-finger fold. The RING-type; atypical zinc finger occupies 53-101 (CSLCKTTLAEGDTIRLNCLHLLHWKCFDEWAANFPATTAPAGYRCPCCS). The segment at 200–221 (GAESSSDTRPLLQLRDADNEEN) is disordered. A helical transmembrane segment spans residues 254 to 274 (KIALFVIFLAVLALITIIMVM).

The protein belongs to the ZFPL1 family.

It is found in the membrane. This is Zinc finger protein-like 1 homolog from Caenorhabditis elegans.